The sequence spans 456 residues: Bifunctional protein GlmU (456 aa).

Residues Met1–Lys228 are pyrophosphorylase. UDP-N-acetyl-alpha-D-glucosamine-binding positions include Leu11–Gly14, Lys25, Gln75, Gly80–Thr81, Tyr102–Asp104, Gly138, Glu153, Asn168, and Asn226. Asp104 is a binding site for Mg(2+). A Mg(2+)-binding site is contributed by Asn226. The interval Arg229–Ala249 is linker. An N-acetyltransferase region spans residues Gly250–Gln456. The UDP-N-acetyl-alpha-D-glucosamine site is built by Arg332 and Lys350. The Proton acceptor role is filled by His362. UDP-N-acetyl-alpha-D-glucosamine contacts are provided by Tyr365 and Asn376. Residues Ala379, Asn385–Tyr386, Ser404, Ala422, and Arg439 contribute to the acetyl-CoA site.

It in the N-terminal section; belongs to the N-acetylglucosamine-1-phosphate uridyltransferase family. This sequence in the C-terminal section; belongs to the transferase hexapeptide repeat family. As to quaternary structure, homotrimer. Mg(2+) serves as cofactor.

It is found in the cytoplasm. The catalysed reaction is alpha-D-glucosamine 1-phosphate + acetyl-CoA = N-acetyl-alpha-D-glucosamine 1-phosphate + CoA + H(+). The enzyme catalyses N-acetyl-alpha-D-glucosamine 1-phosphate + UTP + H(+) = UDP-N-acetyl-alpha-D-glucosamine + diphosphate. It functions in the pathway nucleotide-sugar biosynthesis; UDP-N-acetyl-alpha-D-glucosamine biosynthesis; N-acetyl-alpha-D-glucosamine 1-phosphate from alpha-D-glucosamine 6-phosphate (route II): step 2/2. Its pathway is nucleotide-sugar biosynthesis; UDP-N-acetyl-alpha-D-glucosamine biosynthesis; UDP-N-acetyl-alpha-D-glucosamine from N-acetyl-alpha-D-glucosamine 1-phosphate: step 1/1. It participates in bacterial outer membrane biogenesis; LPS lipid A biosynthesis. Its function is as follows. Catalyzes the last two sequential reactions in the de novo biosynthetic pathway for UDP-N-acetylglucosamine (UDP-GlcNAc). The C-terminal domain catalyzes the transfer of acetyl group from acetyl coenzyme A to glucosamine-1-phosphate (GlcN-1-P) to produce N-acetylglucosamine-1-phosphate (GlcNAc-1-P), which is converted into UDP-GlcNAc by the transfer of uridine 5-monophosphate (from uridine 5-triphosphate), a reaction catalyzed by the N-terminal domain. The protein is Bifunctional protein GlmU of Neisseria gonorrhoeae (strain ATCC 700825 / FA 1090).